Here is a 154-residue protein sequence, read N- to C-terminus: Putative thioredoxin H10 (154 aa).

Residues 24-148 enclose the Thioredoxin domain; it reads NNNNSYGQTR…LQKKTAAAAD (125 aa). Residues cysteine 74 and cysteine 77 each act as nucleophile in the active site. The cysteines at positions 74 and 77 are disulfide-linked.

The protein belongs to the thioredoxin family.

It is found in the cytoplasm. Probable thiol-disulfide oxidoreductase that may be involved in the redox regulation of a number of cytosolic enzymes. This Arabidopsis thaliana (Mouse-ear cress) protein is Putative thioredoxin H10.